Here is a 1394-residue protein sequence, read N- to C-terminus: DNA-directed RNA polymerase subunit beta' (1394 aa).

4 residues coordinate Zn(2+): Cys71, Cys73, Cys86, and Cys89. 3 residues coordinate Mg(2+): Asp462, Asp464, and Asp466. Residues Cys810, Cys883, Cys890, and Cys893 each coordinate Zn(2+).

The protein belongs to the RNA polymerase beta' chain family. In terms of assembly, the RNAP catalytic core consists of 2 alpha, 1 beta, 1 beta' and 1 omega subunit. When a sigma factor is associated with the core the holoenzyme is formed, which can initiate transcription. Mg(2+) serves as cofactor. It depends on Zn(2+) as a cofactor.

The enzyme catalyses RNA(n) + a ribonucleoside 5'-triphosphate = RNA(n+1) + diphosphate. Its function is as follows. DNA-dependent RNA polymerase catalyzes the transcription of DNA into RNA using the four ribonucleoside triphosphates as substrates. The sequence is that of DNA-directed RNA polymerase subunit beta' from Beijerinckia indica subsp. indica (strain ATCC 9039 / DSM 1715 / NCIMB 8712).